Reading from the N-terminus, the 150-residue chain is uncharacterized protein (150 aa).

This is an uncharacterized protein from Acidianus bottle-shaped virus (isolate Italy/Pozzuoli) (ABV).